We begin with the raw amino-acid sequence, 1843 residues long: Xin actin-binding repeat-containing protein 1 (1843 aa).

The segment covering 1–10 has biased composition (polar residues); the sequence is MADTQTQVAP. The interval 1 to 48 is disordered; that stretch reads MADTQTQVAPTPTMRMATAEDLPLPPPPALEDLPLPPPKESFSKFHQQ. The segment at 1–54 is interaction with VASP; sequence MADTQTQVAPTPTMRMATAEDLPLPPPPALEDLPLPPPKESFSKFHQQRQASEL. A compositionally biased stretch (pro residues) spans 23–39; it reads PLPPPPALEDLPLPPPK. Xin repeat units lie at residues 89–104, 121–136, 151–166, and 186–201; these read GDVQ…WRLD, GDVQ…GSFA, GDVR…KPLD, and GDVQ…RPLD. The tract at residues 132–151 is disordered; sequence EGSFANSTDQEPTRPQPGGG. A phosphoserine mark is found at S205, S208, and S213. Xin repeat units follow at residues 226-241 and 264-279; these read GDVK…EPLC and NAVR…RPLD. A Phosphoserine modification is found at S295. A Xin 7 repeat occupies 302-317; sequence PDVSATRWIFETQPLD. S332 carries the phosphoserine modification. Xin repeat units follow at residues 340-355 and 376-391; these read PDVQ…RALD and GDVR…KPLD. Residues 406 to 432 are disordered; sequence DPQDGEGHLSSDSSSALPFSQSAPQRD. Positions 415 to 429 are enriched in low complexity; it reads SSDSSSALPFSQSAP. A Xin 10 repeat occupies 436–451; the sequence is GDVKTFKNLFETLPLD. Positions 455 to 479 are disordered; the sequence is QGEVLAHGSPSREEGTDSAGQAQGI. 2 Xin repeats span residues 507–522 and 545–560; these read GDVQ…QPLD and GDVG…QPLE. Residues 531 to 632 form an interaction with CTNNB1 region; it reads IDVVRGITRQ…AQSCTWMFKP (102 aa). A compositionally biased stretch (basic and acidic residues) spans 564 to 577; it reads QREQQERQKEEGKS. Positions 564-591 are disordered; the sequence is QREQQERQKEEGKSQGDPQPEAPPKGDV. 5 Xin repeats span residues 589-604, 621-636, 654-669, 691-706, and 723-738; these read GDVQ…CPMS, AEAQ…QPVD, GERQ…EPLQ, GQVS…LEAG, and GSVH…CPMG. Disordered regions lie at residues 943–999, 1063–1205, 1238–1277, 1289–1471, and 1561–1696; these read SLRW…QAIG, AEAQ…MAWG, SGPQ…HRAE, DPLL…QKEL, and MSSL…DVSV. 2 stretches are compositionally biased toward polar residues: residues 1064–1073 and 1080–1089; these read EAQSLHQQVL and PTPTATSNPI. Residues 1294–1311 are compositionally biased toward polar residues; that stretch reads SHSSPAGQRTPGGSQTKT. Positions 1357–1368 are enriched in basic and acidic residues; that stretch reads GQREHQRGERDT. Residues 1393 to 1424 show a composition bias toward polar residues; sequence GHSQPSLQHGLSTTAPRPTKNQATGSNAQSSE. The stretch at 1462–1490 forms a coiled coil; sequence DSLQRNQKELQGLLNQVQALEKEAASSVD. Composition is skewed to polar residues over residues 1588–1600 and 1663–1679; these read VTVS…SGSG and SRDS…QSAT. The interaction with FLNC stretch occupies residues 1685–1843; the sequence is TPSFKGNPDV…SCSYSQPAAQ (159 aa).

The protein belongs to the Xin family. As to quaternary structure, interacts (via N-terminus) with CTTN; the interaction promotes CTTN localization to intercalated disks in cardiomyocytes. Interacts with CTNNB1. Interacts with FLNC and VASP. Interacts with F-actin. In terms of tissue distribution, expressed in skeletal muscle at areas of Z-disk disruption in a longitudinal pattern spanning one or more sarcomeres (at protein level). Expressed in the heart (at protein level). As to expression, expressed in the heart.

Its subcellular location is the cell junction. The protein resides in the adherens junction. It localises to the desmosome. In terms of biological role, protects actin filaments from depolymerization. Required for correct cardiac intercalated disk ultrastructure via maintenance of cell-cell adhesion stability, and as a result maintains cardiac organ morphology, conductance and heart beat rhythm. Required for development of normal skeletal muscle morphology and muscle fiber type composition. Plays a role in regulating muscle satellite cell activation and survival, as a result promotes muscle fiber recovery from injury and fatigue. This Homo sapiens (Human) protein is Xin actin-binding repeat-containing protein 1.